Consider the following 187-residue polypeptide: Ubiquinone biosynthesis protein COQ4 homolog, mitochondrial (187 aa).

Residues histidine 77, aspartate 78, histidine 81, and glutamate 93 each contribute to the Zn(2+) site.

Belongs to the COQ4 family. As to quaternary structure, component of a multi-subunit COQ enzyme complex. The cofactor is Zn(2+).

The protein localises to the mitochondrion inner membrane. It carries out the reaction a 4-hydroxy-3-methoxy-5-(all-trans-polyprenyl)benzoate + H(+) = a 2-methoxy-6-(all-trans-polyprenyl)phenol + CO2. Its pathway is cofactor biosynthesis; ubiquinone biosynthesis. Lyase that catalyzes the C1-decarboxylation of 4-hydroxy-3-methoxy-5-(all-trans-polyprenyl)benzoic acid into 2-methoxy-6-(all-trans-polyprenyl)phenol during ubiquinone biosynthesis. The sequence is that of Ubiquinone biosynthesis protein COQ4 homolog, mitochondrial from Leishmania major.